The chain runs to 325 residues: Elongation factor P--(R)-beta-lysine ligase (325 aa).

76–78 is a substrate binding site; it reads SPE. ATP is bound by residues 100 to 102 and Asn-109; that span reads RNE. Tyr-118 provides a ligand contact to substrate. An ATP-binding site is contributed by 244–245; the sequence is EL. Glu-251 lines the substrate pocket. Residue Gly-300 coordinates ATP.

This sequence belongs to the class-II aminoacyl-tRNA synthetase family. EpmA subfamily. As to quaternary structure, homodimer.

It catalyses the reaction D-beta-lysine + L-lysyl-[protein] + ATP = N(6)-((3R)-3,6-diaminohexanoyl)-L-lysyl-[protein] + AMP + diphosphate + H(+). With EpmB is involved in the beta-lysylation step of the post-translational modification of translation elongation factor P (EF-P) on 'Lys-34'. Catalyzes the ATP-dependent activation of (R)-beta-lysine produced by EpmB, forming a lysyl-adenylate, from which the beta-lysyl moiety is then transferred to the epsilon-amino group of EF-P 'Lys-34'. The polypeptide is Elongation factor P--(R)-beta-lysine ligase (Salmonella arizonae (strain ATCC BAA-731 / CDC346-86 / RSK2980)).